Here is a 131-residue protein sequence, read N- to C-terminus: Photosystem II reaction center Psb28 protein (131 aa).

The interval 110–131 (NGLGYSQNQKSDQTDAATEEQA) is disordered. Residues 112–125 (LGYSQNQKSDQTDA) show a composition bias toward polar residues.

The protein belongs to the Psb28 family. Part of the photosystem II complex.

The protein resides in the cellular thylakoid membrane. The chain is Photosystem II reaction center Psb28 protein from Synechococcus sp. (strain CC9902).